Consider the following 1179-residue polypeptide: Golgi apparatus protein 1 (1179 aa).

Residues 1–29 form the signal peptide; the sequence is MAACGRVRRMFRLSAALHLLLLFAAGAEK. At 30–1145 the chain is on the extracellular side; that stretch reads LPGQGVHSQG…MQVMTSPSKN (1116 aa). Positions 32 to 112 are disordered; the sequence is GQGVHSQGQG…GAGAGGGWKL (81 aa). The span at 60–84 shows a compositional bias: low complexity; that stretch reads GQQLPQLPQSSQLQQQQQQQQQQQQ. The segment covering 85 to 96 has biased composition (pro residues); that stretch reads PQPPQPPFPAGG. Cys-rich GLG1 repeat units follow at residues 116–149, 150–212, 215–278, 286–346, 347–413, 414–473, 475–537, 538–604, 609–668, 670–728, 729–788, 796–856, 858–911, 912–979, 980–1035, and 1041–1101; these read ESCREDVTRVCPKHTWSNNLAVLECLQDVREPEN, EISS…GNIT, QCHQ…VKEA, QVSE…FEES, MSEK…HRGR, QVSS…RGEK, NLGM…YTEK, MVED…YRTE, RLSR…DDLV, ECRD…KHQK, DMNE…RNDT, RVSL…KQLS, RCHQ…KNSE, LMDP…ADQR, LSSD…ECLK, and IKTE…EDKR. 2 N-linked (GlcNAc...) asparagine glycosylation sites follow: N165 and N210. A glycan (N-linked (GlcNAc...) asparagine) is linked at N581. 2 N-linked (GlcNAc...) asparagine glycosylation sites follow: N677 and N786. S961 bears the Phosphoserine mark. The chain crosses the membrane as a helical span at residues 1146-1166; sequence YILSVISGSICILFLIGLMCG. At 1167–1179 the chain is on the cytoplasmic side; the sequence is RITKRVTRELKDR.

Post-translationally, fucosylation is essential for binding to E-selectin. N-glycosylated. Contains sialic acid residues. In terms of tissue distribution, widely expressed. Highest levels in pancreas, skeletal muscle, placenta, heart, testis and ovary. Also found in the kidney, liver, lung and brain.

The protein localises to the golgi apparatus membrane. Its subcellular location is the golgi outpost. It is found in the cytoplasm. The protein resides in the cytoskeleton. It localises to the microtubule organizing center. Functionally, binds fibroblast growth factor and E-selectin (cell-adhesion lectin on endothelial cells mediating the binding of neutrophils). The sequence is that of Golgi apparatus protein 1 (GLG1) from Homo sapiens (Human).